Here is a 422-residue protein sequence, read N- to C-terminus: Mannose-1-phosphate guanylyltransferase regulatory subunit alpha-A (422 aa).

The tract at residues 2–253 is substrate-binding domain; it reads LKAVILIGGP…DRFWSQIKSA (252 aa). Positions 85 and 249 each coordinate GDP-alpha-D-mannose. Residues 275 to 422 are hexapeptide repeat domain; sequence LATNTEGGAK…NRSFKNQIIL (148 aa). A C-loop region spans residues 358–386; the sequence is TPSDPNPNDPYAKIDSETLFRDGKLTPSI.

The protein belongs to the transferase hexapeptide repeat family. As to quaternary structure, component of the GMPPA-GMPPB mannose-1-phosphate guanylyltransferase complex composed of 4 gmppa subunits and 8 gmppb subunits; the complex is organized into three layers, a central layer made up of 2 gmppa dimers sandwiched between two layers each made up of 2 gmppb dimers.

It participates in nucleotide-sugar biosynthesis; GDP-alpha-D-mannose biosynthesis; GDP-alpha-D-mannose from alpha-D-mannose 1-phosphate (GTP route): step 1/1. Its function is as follows. Regulatory subunit of the GMPPA-GMPPB mannose-1-phosphate guanylyltransferase complex; reduces the catalytic activity of GMPPB when part of the complex. Mediates allosteric feedback inhibition of GMPPB catalytic activity upon binding GDP-alpha-D-mannose. Together with GMPPB regulates GDP-alpha-D-mannose levels. One of two paralogs (gmppaa and gmppab) that may have redundant functions. This chain is Mannose-1-phosphate guanylyltransferase regulatory subunit alpha-A (gmppaa), found in Danio rerio (Zebrafish).